The following is a 344-amino-acid chain: Dihydroorotase (344 aa).

The Zn(2+) site is built by His-13 and His-15. Substrate is bound by residues 15–17 (HLR) and Asn-41. Zn(2+) is bound by residues Lys-98, His-135, and His-173. Lys-98 is modified (N6-carboxylysine). His-135 is a binding site for substrate. Position 218 (Leu-218) interacts with substrate. A Zn(2+)-binding site is contributed by Asp-247. Residue Asp-247 is part of the active site. Substrate is bound by residues His-251 and Ala-263.

Belongs to the metallo-dependent hydrolases superfamily. DHOase family. Class II DHOase subfamily. In terms of assembly, homodimer. The cofactor is Zn(2+).

The catalysed reaction is (S)-dihydroorotate + H2O = N-carbamoyl-L-aspartate + H(+). Its pathway is pyrimidine metabolism; UMP biosynthesis via de novo pathway; (S)-dihydroorotate from bicarbonate: step 3/3. Its function is as follows. Catalyzes the reversible cyclization of carbamoyl aspartate to dihydroorotate. This is Dihydroorotase from Neisseria gonorrhoeae (strain ATCC 700825 / FA 1090).